The primary structure comprises 424 residues: Histidine--tRNA ligase (424 aa).

The protein belongs to the class-II aminoacyl-tRNA synthetase family. As to quaternary structure, homodimer.

It is found in the cytoplasm. It carries out the reaction tRNA(His) + L-histidine + ATP = L-histidyl-tRNA(His) + AMP + diphosphate + H(+). In Salmonella dublin (strain CT_02021853), this protein is Histidine--tRNA ligase.